The chain runs to 283 residues: Probable endonuclease 4 (283 aa).

Residues His-69, His-109, Glu-144, Asp-178, His-181, His-215, Asp-228, His-230, and Glu-260 each contribute to the Zn(2+) site.

Belongs to the AP endonuclease 2 family. Zn(2+) is required as a cofactor.

The catalysed reaction is Endonucleolytic cleavage to 5'-phosphooligonucleotide end-products.. Its function is as follows. Endonuclease IV plays a role in DNA repair. It cleaves phosphodiester bonds at apurinic or apyrimidinic (AP) sites, generating a 3'-hydroxyl group and a 5'-terminal sugar phosphate. This chain is Probable endonuclease 4, found in Thermosipho melanesiensis (strain DSM 12029 / CIP 104789 / BI429).